A 566-amino-acid chain; its full sequence is DNA ligase B (566 aa).

Catalysis depends on Lys-125, which acts as the N6-AMP-lysine intermediate.

This sequence belongs to the NAD-dependent DNA ligase family. LigB subfamily.

It carries out the reaction NAD(+) + (deoxyribonucleotide)n-3'-hydroxyl + 5'-phospho-(deoxyribonucleotide)m = (deoxyribonucleotide)n+m + AMP + beta-nicotinamide D-nucleotide.. Catalyzes the formation of phosphodiester linkages between 5'-phosphoryl and 3'-hydroxyl groups in double-stranded DNA using NAD as a coenzyme and as the energy source for the reaction. This is DNA ligase B from Pseudomonas putida (strain GB-1).